A 442-amino-acid chain; its full sequence is Exodeoxyribonuclease 7 large subunit (442 aa).

It belongs to the XseA family. Heterooligomer composed of large and small subunits.

Its subcellular location is the cytoplasm. The enzyme catalyses Exonucleolytic cleavage in either 5'- to 3'- or 3'- to 5'-direction to yield nucleoside 5'-phosphates.. Bidirectionally degrades single-stranded DNA into large acid-insoluble oligonucleotides, which are then degraded further into small acid-soluble oligonucleotides. The chain is Exodeoxyribonuclease 7 large subunit from Shewanella woodyi (strain ATCC 51908 / MS32).